A 106-amino-acid chain; its full sequence is Putative membrane protein insertion efficiency factor (106 aa).

This sequence belongs to the UPF0161 family.

Its subcellular location is the cell inner membrane. In terms of biological role, could be involved in insertion of integral membrane proteins into the membrane. The protein is Putative membrane protein insertion efficiency factor of Acinetobacter baumannii (strain SDF).